The primary structure comprises 474 residues: Lactococcin A secretion protein LcnD (474 aa).

Residues 1 to 21 (MFDKKLLESSELYDKRYRNFS) are Cytoplasmic-facing. The chain crosses the membrane as a helical span at residues 22–44 (TLIILPLFILLVGGVIFTFFAHK). At 45-474 (ELTVISTGSI…LDKIMGRGNQ (430 aa)) the chain is on the extracellular side.

Belongs to the membrane fusion protein (MFP) (TC 8.A.1) family.

The protein localises to the cell membrane. Its function is as follows. Involved in the secretion of lactococcin A. The chain is Lactococcin A secretion protein LcnD (lcnD) from Lactococcus lactis subsp. cremoris (Streptococcus cremoris).